The primary structure comprises 298 residues: Dioxygenase aneA (298 aa).

Positions 134, 136, and 213 each coordinate Fe cation.

Belongs to the PhyH family. As to quaternary structure, homodimer. Fe cation serves as cofactor.

It carries out the reaction aculene D + 2-oxoglutarate + O2 = aculene C + succinate + CO2 + H2O. It catalyses the reaction aculene B + 2-oxoglutarate + O2 = aculene A + succinate + CO2 + H2O. It functions in the pathway secondary metabolite biosynthesis. Its function is as follows. Dioxygenase; part of the gene cluster that mediates the biosynthesis of aculenes, a unique type of norsesquiterpenes that contain a nordaucane skeleton linked to an L-proline moiety and are of mixed biosynthetic origin. The pathway begins with the synthesis of dauca-4,7-diene by the terpene cyclase aneC using farnesyl pyrophosphate (FPP) as substrate. The cytochrome P450 monooxygenase aneF then performs the initial oxidation at C-12 of dauca-4,7-diene to yield asperaculane D. Asperaculane D is substrate of the cytochrome P450 monooxygenase aneD for C-10 hydroxylation to yield asperaculane E. The cytochrome P450 monooxygenase aneG then converts asperaculane E into aculene D via C-2 oxidation. The monomodular nonribosomal peptide synthase aneB adenylates L-proline and the thiohydrolase aneE transfers this activated L-proline derivative to aculenes D and C to produce respectively aculenes B and A. The dioxygenase aneA converts aculene D into aculene C, and aculene B into aculene A by introducing the 5,6-alkene moiety. Asperculanes A, B, C and F, as well as 14-prolyl asperculane C, might be shunt products of the pathway. The polypeptide is Dioxygenase aneA (Aspergillus aculeatus (strain ATCC 16872 / CBS 172.66 / WB 5094)).